Here is a 991-residue protein sequence, read N- to C-terminus: Gingipain R1 (991 aa).

The first 24 residues, 1 to 24, serve as a signal peptide directing secretion; it reads MKNLNKFVSIALCSSLLGGMAFAQ. The propeptide occupies 25–227; sequence QTELGRNPNV…RMFMNYEPGR (203 aa). Ca(2+)-binding residues include Asp305, Val327, Asp330, Tyr332, Glu334, Glu388, and His393. His438 acts as the Proton donor in catalysis. Cys471 serves as the catalytic Nucleophile. Ca(2+)-binding residues include Phe476, Glu485, Asp519, Glu520, Glu523, and His529.

It belongs to the peptidase C25 family.

It is found in the secreted. It catalyses the reaction Hydrolysis of proteins and small molecule substrates, with a preference for Arg in P1.. Its activity is regulated as follows. Requires cysteine for activation and Ca(2+) and/or Mg(2+) for stabilization. It is stimulated by glycine-containing dipeptides. It is resistant to inhibition by proteinase inhibitors in human plasma. In terms of biological role, thiol protease. Acts synergistically with RgpB to catalyze the maturation of fimbrial subunits, such as FimA. Its proteolytic activity is a major factor in both periodontal tissue destruction and in evasion of host defense mechanisms. This is Gingipain R1 (rgpA) from Porphyromonas gingivalis (Bacteroides gingivalis).